Here is a 259-residue protein sequence, read N- to C-terminus: 3-hydroxypropionyl-coenzyme A dehydratase (259 aa).

The Nucleophile role is filled by Glu-113. The Proton acceptor role is filled by Glu-133.

This sequence belongs to the enoyl-CoA hydratase/isomerase family. Monomer.

The catalysed reaction is 3-hydroxypropanoyl-CoA = acryloyl-CoA + H2O. Its function is as follows. Plays a role in autotrophic carbon fixation via the 3-hydroxypropionate/4-hydroxybutyrate cycle. Catalyzes the reversible dehydration of 3-hydroxypropionyl-CoA to form acryloyl-CoA, and the reversible dehydration of (S)-3-hydroxybutyryl-CoA to form crotonyl-CoA. Inactive towards (R)-3-hydroxybutyryl-CoA. This is 3-hydroxypropionyl-coenzyme A dehydratase from Metallosphaera sedula (strain ATCC 51363 / DSM 5348 / JCM 9185 / NBRC 15509 / TH2).